A 21-amino-acid polypeptide reads, in one-letter code: Magainin-B1 (21 aa).

In terms of tissue distribution, expressed by the skin glands.

The protein resides in the secreted. Has no antimicrobial activity against tested bacteria. The protein is Magainin-B1 of Xenopus borealis (Kenyan clawed frog).